A 346-amino-acid chain; its full sequence is F(420)H(2) dehydrogenase subunit H (346 aa).

8 consecutive transmembrane segments (helical) span residues 18–38 (GIVGLVLIGVIFMGAMGAVWL), 91–111 (IFMLGSVFLMLVALPVGAVFI), 125–145 (ISVLYIEAVSALSIFGIFMVA), 170–190 (PLGITVISVAAMTGSLNIVDI), 196–216 (LHWNIFLQPLGCFVFFVSLMA), 257–277 (ILGSFLVALLFLGGWNVPGFI), 284–304 (GIIVPTGFLIVKVVFVLMVII), and 326–346 (LLPLALLNLVWAVGLGLYLGA).

This sequence belongs to the complex I subunit 1 family. The FPO complex is composed of at least 13 different subunits. FpoA, FpoH, FpoJ, FpoK, FpoL, FpoM and FpoN proteins constitute the membrane sector of the complex.

The protein localises to the cell membrane. It catalyses the reaction methanophenazine + reduced coenzyme F420-(gamma-L-Glu)(n) = dihydromethanophenazine + oxidized coenzyme F420-(gamma-L-Glu)(n) + H(+). Functionally, component of the F(420)H(2) dehydrogenase (FPO complex) which is part of the energy-conserving F(420)H(2):heterodisulfide oxidoreductase system. The membrane-bound electron transfer system of the complex plays an important role in the metabolism of methylotrophic methanogens when the organisms grow on methanol or methylamines. Catalyzes the oxidation of methanophenazine to dihydromethanophenazine. It shuttles electrons from F(420)H(2), via FAD and iron-sulfur (Fe-S) centers, to methanophenazine (an electron carrier in the membrane). It couples the redox reaction to proton translocation (for every two electrons transferred, two hydrogen ions are translocated across the cytoplasmic membrane), and thus conserves the redox energy in a proton gradient. In Methanosarcina barkeri (strain Fusaro / DSM 804), this protein is F(420)H(2) dehydrogenase subunit H.